A 657-amino-acid chain; its full sequence is Pyoverdine export ATP-binding/permease protein PvdT (657 aa).

The ABC transporter domain maps to 6–245 (IDLQDIRKSY…ASTNPGALQA (240 aa)). 43-50 (GASGSGKS) provides a ligand contact to ATP. The next 4 helical transmembrane spans lie at 285–305 (ALTL…LAVG), 539–559 (IAAI…LMTV), 590–610 (LSVV…GVLI), and 620–640 (LVAI…FGFM).

Belongs to the ABC transporter superfamily. Macrolide exporter (TC 3.A.1.122) family. As to quaternary structure, part of the tripartite efflux system PvdRT-OpmQ, which is composed of an inner membrane component with both ATPase and permease domains, PvdT, a periplasmic membrane fusion protein, PvdR, and an outer membrane component, OpmQ.

The protein localises to the cell inner membrane. Part of the tripartite efflux system PvdRT-OpmQ required for the secretion into the extracellular milieu of the siderophore pyoverdine (PVD), which is involved in iron acquisition. This subunit binds PVD and drives its secretion by hydrolyzing ATP. The system is responsible for export of newly synthesized PVD after the final steps of biosynthesis have taken place in the periplasm. It is also responsible for recycling of PVD after internalization of ferri-PVD into the periplasm by the outer-membrane receptor FpvA and release of iron from PVD, thus making PVD available for new cycles of iron uptake. The sequence is that of Pyoverdine export ATP-binding/permease protein PvdT from Pseudomonas fluorescens (strain Pf0-1).